A 384-amino-acid chain; its full sequence is Class V chitinase CHIT5a (384 aa).

The first 27 residues, 1-27 (MAVQKIIITPILVFLVTIFFNVSSSSS), serve as a signal peptide directing secretion. Residues N29, N114, and N133 are each glycosylated (N-linked (GlcNAc...) asparagine). Positions 39-384 (GVRSAYWPAG…SKQASNAWGH (346 aa)) constitute a GH18 domain. E152 (proton donor) is an active-site residue. 2 N-linked (GlcNAc...) asparagine glycosylation sites follow: N195 and N234.

This sequence belongs to the glycosyl hydrolase 18 family. Chitinase class V subfamily.

It catalyses the reaction Random endo-hydrolysis of N-acetyl-beta-D-glucosaminide (1-&gt;4)-beta-linkages in chitin and chitodextrins.. The protein operates within glycan degradation; chitin degradation. In terms of biological role, possesses chitinase activity in vitro toward glycol chitin, carboxymethyl-chitin, colloidal chitin, and the chitin oligosaccharides (N-acetylglucosamine) (GlcNAc)6 and (GlcNAc)5. Hydrolyzes (GlcNAc)6 into (GlcNAc)4 and (GlcNAc)2, or two (GlcNAc)3 molecules. Has the capacity to inhibit hyphal growth of the fungus Trichoderma viride in an agar-plate bioassay. In Medicago truncatula (Barrel medic), this protein is Class V chitinase CHIT5a.